The sequence spans 1451 residues: Dicer-like protein 2 (1451 aa).

The segment at 34-53 (YDGHLSEEDSPGGKPRPKEQ) is disordered. The Helicase ATP-binding domain occupies 70–247 (MLEASLKENI…LKRLESTLDA (178 aa)). 83-90 (MDTGSGKT) serves as a coordination point for ATP. A DEAH box motif is present at residues 190–193 (DEAH). Positions 412-582 (KVQRIIEVLL…RLEAIENSEA (171 aa)) constitute a Helicase C-terminal domain. The 102-residue stretch at 603-704 (AKSHLQHFVS…LPLRDRLELE (102 aa)) folds into the Dicer dsRNA-binding fold domain. RNase III domains are found at residues 968–1111 (AAEL…VDGG) and 1153–1351 (LQLL…VDAG). A Mg(2+)-binding site is contributed by E1192. Positions 1253–1272 (EGDSDSKSSGDSTSDKASPR) are disordered. Mg(2+)-binding residues include D1337 and E1340.

It belongs to the helicase family. Dicer subfamily. Mg(2+) serves as cofactor. Requires Mn(2+) as cofactor.

Its function is as follows. Dicer-like endonuclease involved in cleaving double-stranded RNA in the RNA interference (RNAi) pathway. Produces 21 to 25 bp dsRNAs (siRNAs) which target the selective destruction of homologous RNAs leading to sequence-specific suppression of gene expression, called post-transcriptional gene silencing (PTGS). Part of a broad host defense, DCL-2 is involved in antiviral defense against mycoviruses like the hypovirus CHV1-EP713 and the reovirus MyRV1-Cp9B21. This Cryphonectria parasitica (Chestnut blight fungus) protein is Dicer-like protein 2 (DCL-2).